Consider the following 61-residue polypeptide: Large ribosomal subunit protein bL32 (61 aa).

The span at 1 to 16 (MAVPKRKTSPSKRGMR) shows a compositional bias: basic residues. Residues 1 to 35 (MAVPKRKTSPSKRGMRRSADGLKSATYVEDKNSGE) are disordered.

Belongs to the bacterial ribosomal protein bL32 family.

The chain is Large ribosomal subunit protein bL32 from Agrobacterium fabrum (strain C58 / ATCC 33970) (Agrobacterium tumefaciens (strain C58)).